The sequence spans 222 residues: Thiamine-phosphate synthase (222 aa).

4-amino-2-methyl-5-(diphosphooxymethyl)pyrimidine-binding positions include 42–46 (QYRDK) and N74. 2 residues coordinate Mg(2+): D75 and D94. Position 113 (T113) interacts with 4-amino-2-methyl-5-(diphosphooxymethyl)pyrimidine. 140–142 (SAT) contacts 2-[(2R,5Z)-2-carboxy-4-methylthiazol-5(2H)-ylidene]ethyl phosphate. K143 is a binding site for 4-amino-2-methyl-5-(diphosphooxymethyl)pyrimidine. G169 lines the 2-[(2R,5Z)-2-carboxy-4-methylthiazol-5(2H)-ylidene]ethyl phosphate pocket.

The protein belongs to the thiamine-phosphate synthase family. Requires Mg(2+) as cofactor.

It carries out the reaction 2-[(2R,5Z)-2-carboxy-4-methylthiazol-5(2H)-ylidene]ethyl phosphate + 4-amino-2-methyl-5-(diphosphooxymethyl)pyrimidine + 2 H(+) = thiamine phosphate + CO2 + diphosphate. The enzyme catalyses 2-(2-carboxy-4-methylthiazol-5-yl)ethyl phosphate + 4-amino-2-methyl-5-(diphosphooxymethyl)pyrimidine + 2 H(+) = thiamine phosphate + CO2 + diphosphate. The catalysed reaction is 4-methyl-5-(2-phosphooxyethyl)-thiazole + 4-amino-2-methyl-5-(diphosphooxymethyl)pyrimidine + H(+) = thiamine phosphate + diphosphate. It functions in the pathway cofactor biosynthesis; thiamine diphosphate biosynthesis; thiamine phosphate from 4-amino-2-methyl-5-diphosphomethylpyrimidine and 4-methyl-5-(2-phosphoethyl)-thiazole: step 1/1. Its function is as follows. Condenses 4-methyl-5-(beta-hydroxyethyl)thiazole monophosphate (THZ-P) and 2-methyl-4-amino-5-hydroxymethyl pyrimidine pyrophosphate (HMP-PP) to form thiamine monophosphate (TMP). The sequence is that of Thiamine-phosphate synthase from Marinobacter nauticus (strain ATCC 700491 / DSM 11845 / VT8) (Marinobacter aquaeolei).